Reading from the N-terminus, the 577-residue chain is MRFKIRGPLIQLRYKSTKAFYITTPIFYVNAAPHIGHLYSMLIADTRNKWEKLNPSKESFMLTGTDEHGLKIQSTAEKLGLEPKVLVDKVSQNFSKLAEQFDVNYDRFIRTTDNDHIELVRYFWNLMMEKGFIYTDTHSGWYSISDETFFPETQIEEVVKNGKAVKISSETKNEVVYQEETNYFFKLSMFQEQLIQFLKQNPEFIKPKHRYQFILKELEDTKLPDLSISRPSSRLKWSIEVPNDSTQKIYVWFDALLNYLTATKFPHGFEVQDSKFVTPENSIWPATHVIGKDIIRFHCIYWPIFLMAAGIELPKQVIVHSHWLCDGFKMSKSLGNLVDPMEISEYYGVDPVRFFLVENSNIDDDCKFSEELLQRSRDAVLGKYCNLISRIGGKNFSIEEAVKSFASGEFNNIREIIETYTINKDSVEGLLSSLNKLTTDLNDLYNQMDHYFTNFDYIRAIQCWWSVINQANQIFQSAEPWTYVKLINSPETPAELKEKYRILNNYFVYLCAETTRISSILIQPVMPQLSKKILDRLNVSGRTSEFTTLSADLQYGSGANSKSHKVPLEKIAPRDIK.

Positions P25–H37 match the 'HIGH' region motif. Residues K329–S333 carry the 'KMSKS' region motif. ATP is bound at residue K332.

It belongs to the class-I aminoacyl-tRNA synthetase family.

It localises to the mitochondrion matrix. The catalysed reaction is tRNA(Met) + L-methionine + ATP = L-methionyl-tRNA(Met) + AMP + diphosphate. This is Methionine--tRNA ligase, mitochondrial (MSM1) from Candida albicans (Yeast).